Here is a 235-residue protein sequence, read N- to C-terminus: Ribitol-5-phosphate cytidylyltransferase (235 aa).

CTP is bound by residues 7–10 (LAGG), 82–88 (GADRNTS), and serine 113.

It belongs to the IspD/TarI cytidylyltransferase family. TarI subfamily.

The catalysed reaction is D-ribitol 5-phosphate + CTP + H(+) = CDP-L-ribitol + diphosphate. The protein operates within cell wall biogenesis; poly(ribitol phosphate) teichoic acid biosynthesis. Catalyzes the transfer of the cytidylyl group of CTP to D-ribitol 5-phosphate. The protein is Ribitol-5-phosphate cytidylyltransferase of Streptococcus pneumoniae (strain ATCC 700669 / Spain 23F-1).